The primary structure comprises 24 residues: Defensin D6 (24 aa).

Belongs to the DEFL family. Group IV subfamily. As to expression, distributed in the epidermal cell layer of leaves and in the subepidermal layer region of stems. Not in roots.

The protein resides in the secreted. The protein localises to the cell wall. Functionally, antimicrobial peptide. Active against Fusarium spp., Gram-positive and Gram-negative bacterial pathogens. The sequence is that of Defensin D6 from Spinacia oleracea (Spinach).